A 1233-amino-acid polypeptide reads, in one-letter code: DNA-directed RNA polymerase subunit beta' (1233 aa).

Zn(2+) contacts are provided by Cys61, Cys63, Cys76, and Cys79. Mg(2+) contacts are provided by Asp455, Asp457, and Asp459. Residues Cys824, Cys898, Cys905, and Cys908 each coordinate Zn(2+). Residues 1211–1220 show a composition bias toward basic and acidic residues; that stretch reads ELQKAFDKEP. Positions 1211–1233 are disordered; the sequence is ELQKAFDKEPASSTGNKASNSAK. Residues 1221 to 1233 show a composition bias toward polar residues; that stretch reads ASSTGNKASNSAK.

This sequence belongs to the RNA polymerase beta' chain family. As to quaternary structure, the RNAP catalytic core consists of 2 alpha, 1 beta, 1 beta' and 1 omega subunit. When a sigma factor is associated with the core the holoenzyme is formed, which can initiate transcription. Requires Mg(2+) as cofactor. Zn(2+) is required as a cofactor.

It carries out the reaction RNA(n) + a ribonucleoside 5'-triphosphate = RNA(n+1) + diphosphate. In terms of biological role, DNA-dependent RNA polymerase catalyzes the transcription of DNA into RNA using the four ribonucleoside triphosphates as substrates. The polypeptide is DNA-directed RNA polymerase subunit beta' (Oenococcus oeni (strain ATCC BAA-331 / PSU-1)).